The primary structure comprises 384 residues: Cell division protein FtsZ (384 aa).

GTP-binding positions include 20-24 (GGGGN), 107-109 (GTG), Glu-138, Arg-142, and Asn-186.

This sequence belongs to the FtsZ family. As to quaternary structure, homodimer. Polymerizes to form a dynamic ring structure in a strictly GTP-dependent manner. Interacts directly with several other division proteins.

It localises to the cytoplasm. Functionally, essential cell division protein that forms a contractile ring structure (Z ring) at the future cell division site. The regulation of the ring assembly controls the timing and the location of cell division. One of the functions of the FtsZ ring is to recruit other cell division proteins to the septum to produce a new cell wall between the dividing cells. Binds GTP and shows GTPase activity. The sequence is that of Cell division protein FtsZ from Buchnera aphidicola subsp. Schizaphis graminum (strain Sg).